The following is a 305-amino-acid chain: Homoserine O-acetyltransferase (305 aa).

Cys-142 functions as the Acyl-thioester intermediate in the catalytic mechanism. Substrate is bound by residues Lys-163 and Ser-192. The Proton acceptor role is filled by His-235. Glu-237 is an active-site residue. Arg-249 serves as a coordination point for substrate.

This sequence belongs to the MetA family.

It localises to the cytoplasm. The enzyme catalyses L-homoserine + acetyl-CoA = O-acetyl-L-homoserine + CoA. It functions in the pathway amino-acid biosynthesis; L-methionine biosynthesis via de novo pathway; O-acetyl-L-homoserine from L-homoserine: step 1/1. Its function is as follows. Transfers an acetyl group from acetyl-CoA to L-homoserine, forming acetyl-L-homoserine. The protein is Homoserine O-acetyltransferase of Dinoroseobacter shibae (strain DSM 16493 / NCIMB 14021 / DFL 12).